The sequence spans 146 residues: UPF0178 protein BC_3040 (146 aa).

Belongs to the UPF0178 family.

The protein is UPF0178 protein BC_3040 of Bacillus cereus (strain ATCC 14579 / DSM 31 / CCUG 7414 / JCM 2152 / NBRC 15305 / NCIMB 9373 / NCTC 2599 / NRRL B-3711).